We begin with the raw amino-acid sequence, 184 residues long: dCTP deaminase (184 aa).

Residues 107-112 (KSTYAR), 131-133 (TLE), glutamine 152, tyrosine 166, and glutamine 176 contribute to the dCTP site. Glutamate 133 serves as the catalytic Proton donor/acceptor.

Belongs to the dCTP deaminase family. In terms of assembly, homotrimer.

The enzyme catalyses dCTP + H2O + H(+) = dUTP + NH4(+). It participates in pyrimidine metabolism; dUMP biosynthesis; dUMP from dCTP (dUTP route): step 1/2. Its function is as follows. Catalyzes the deamination of dCTP to dUTP. The polypeptide is dCTP deaminase (Erythrobacter litoralis (strain HTCC2594)).